Reading from the N-terminus, the 335-residue chain is Nucleoid-associated protein CKO_00588 (335 aa).

Belongs to the YejK family.

It is found in the cytoplasm. The protein resides in the nucleoid. The sequence is that of Nucleoid-associated protein CKO_00588 from Citrobacter koseri (strain ATCC BAA-895 / CDC 4225-83 / SGSC4696).